A 245-amino-acid chain; its full sequence is tRNA (guanine-N(1)-)-methyltransferase (245 aa).

S-adenosyl-L-methionine is bound by residues Gly-108 and 127-132 (IGDYVL).

The protein belongs to the RNA methyltransferase TrmD family. Homodimer.

Its subcellular location is the cytoplasm. The enzyme catalyses guanosine(37) in tRNA + S-adenosyl-L-methionine = N(1)-methylguanosine(37) in tRNA + S-adenosyl-L-homocysteine + H(+). Specifically methylates guanosine-37 in various tRNAs. This is tRNA (guanine-N(1)-)-methyltransferase from Lactobacillus delbrueckii subsp. bulgaricus (strain ATCC 11842 / DSM 20081 / BCRC 10696 / JCM 1002 / NBRC 13953 / NCIMB 11778 / NCTC 12712 / WDCM 00102 / Lb 14).